Reading from the N-terminus, the 116-residue chain is PTS system N,N'-diacetylchitobiose-specific EIIA component (116 aa).

Residues 15–113 (EELEEVVMGL…ITELIELHEK (99 aa)) enclose the PTS EIIA type-3 domain. His89 serves as the catalytic Tele-phosphohistidine intermediate. His89 bears the Phosphohistidine; by HPr mark.

In terms of assembly, forms a complex with ChbB (EIIB). ChbA is a homotrimer. Mg(2+) is required as a cofactor.

Its subcellular location is the cytoplasm. In terms of biological role, the phosphoenolpyruvate-dependent sugar phosphotransferase system (sugar PTS), a major carbohydrate active transport system, catalyzes the phosphorylation of incoming sugar substrates concomitantly with their translocation across the cell membrane. The enzyme II ChbABC PTS system is involved in the transport of the chitin disaccharide N,N'-diacetylchitobiose (GlcNAc2). This Escherichia coli O157:H7 protein is PTS system N,N'-diacetylchitobiose-specific EIIA component (chbA).